The following is a 102-amino-acid chain: Large ribosomal subunit protein mL63 (102 aa).

The protein belongs to the mitochondrion-specific ribosomal protein mL63 family.

It is found in the mitochondrion. This is Large ribosomal subunit protein mL63 (Mrpl57) from Mus musculus (Mouse).